The following is a 296-amino-acid chain: 4-hydroxy-tetrahydrodipicolinate synthase (296 aa).

Threonine 49 serves as a coordination point for pyruvate. Tyrosine 137 acts as the Proton donor/acceptor in catalysis. Lysine 166 functions as the Schiff-base intermediate with substrate in the catalytic mechanism. Residue isoleucine 208 participates in pyruvate binding.

This sequence belongs to the DapA family. Homotetramer; dimer of dimers.

It localises to the cytoplasm. It carries out the reaction L-aspartate 4-semialdehyde + pyruvate = (2S,4S)-4-hydroxy-2,3,4,5-tetrahydrodipicolinate + H2O + H(+). It participates in amino-acid biosynthesis; L-lysine biosynthesis via DAP pathway; (S)-tetrahydrodipicolinate from L-aspartate: step 3/4. In terms of biological role, catalyzes the condensation of (S)-aspartate-beta-semialdehyde [(S)-ASA] and pyruvate to 4-hydroxy-tetrahydrodipicolinate (HTPA). This is 4-hydroxy-tetrahydrodipicolinate synthase from Chlorobium phaeovibrioides (strain DSM 265 / 1930) (Prosthecochloris vibrioformis (strain DSM 265)).